Consider the following 327-residue polypeptide: Ribosomal RNA small subunit methyltransferase H (327 aa).

Residues 36–38, Asp-61, Phe-88, Asp-114, and Gln-121 contribute to the S-adenosyl-L-methionine site; that span reads GGH.

It belongs to the methyltransferase superfamily. RsmH family.

The protein resides in the cytoplasm. The catalysed reaction is cytidine(1402) in 16S rRNA + S-adenosyl-L-methionine = N(4)-methylcytidine(1402) in 16S rRNA + S-adenosyl-L-homocysteine + H(+). In terms of biological role, specifically methylates the N4 position of cytidine in position 1402 (C1402) of 16S rRNA. The protein is Ribosomal RNA small subunit methyltransferase H of Chlorobium luteolum (strain DSM 273 / BCRC 81028 / 2530) (Pelodictyon luteolum).